The primary structure comprises 174 residues: MGKITFYEDRGFQGRHYECSSDHSNLQPYFSRCNSIRVDSGCWMLYEQPNFQGPQYFLRRGDYPDYQQWMGLNDSIRSCRLIPHTGSHRLRIYEREDYRGQMVEITEDCSSLHDRFHFSEIHSFNVLEGWWVLYEMTNYRGRQYLLRPGDYRRYHDWGATNARVGSLRRAVDFY.

2 Beta/gamma crystallin 'Greek key' domains span residues 2–40 and 41–83; these read GKITFYEDRGFQGRHYECSSDHSNLQPYFSRCNSIRVDS and GCWM…RLIP. The segment at 84–87 is connecting peptide; it reads HTGS. 2 Beta/gamma crystallin 'Greek key' domains span residues 88–128 and 129–171; these read HRLR…NVLE and GWWV…RRAV.

Belongs to the beta/gamma-crystallin family.

Its function is as follows. Crystallins are the dominant structural components of the vertebrate eye lens. The polypeptide is Gamma-crystallin F (CRYGF) (Bos taurus (Bovine)).